Reading from the N-terminus, the 718-residue chain is MKQLFATTSRGFEELLKVELTDLGAQECRVVQGGVHFIANDETQYRILLWSRLSSRILLPLITTKIYSDLDLYSAIVGQNWLTHFDERVTFLVDFNGTNREIRHTQFGAMRVKDGIVDYFERHGKTRPNVDKEYPDIRIHAYLNQDELVVSLDLSGEALHLRGYREDTGKAPLRETLAAAIVLRSSWEKGTPLVDPMCGSGTLLIEAAQMEAQIAPQLHRLHWGFDFWKGHNQVVWEKVKQEAVELAEQAFNRKLTPHFWGFDLDHRVLKKAQKNAQNAGVSHLIKWQQGDVAGLKNPTEQEIGTVICNPPYGERLGTTPALIALYSVFGRQLKTEFADWNVSIFSGEPALLDCLRLRAYRQFKAKNGPLDCVQKNYHIAVRKQVESAVENSQEKTLTFVSENTQVAQDFANRLRKNIKKIDKWANQQKLDAYRLYDADLPEYNLAVDRYADHIIVQEYAAPKNVDENKARQRLLDAVSAILSVTGIETNKLILKVRQKQKGTSQYEKLANKGEYFYVHEYGAKLWVNLTDYLDTGLFLDHRLTRKMLGEMAVGKDFLNLFAYTGSATVHAALGLAKSTTTVDMSNTYLNWAEQNLLLNDIEGKQHKLIQADCLQWLNKCDRQFDLIFVDPPTFSNSKRMEDSWDVQRDHIKLMANLKRILRTNGTIVFSNNKRGFKMDIDGLQELELSAVEISAKTLPLDFERNKQIHNCWIIRHQS.

The 112-residue stretch at 43–154 (TQYRILLWSR…QDELVVSLDL (112 aa)) folds into the THUMP domain.

Belongs to the methyltransferase superfamily. RlmKL family.

Its subcellular location is the cytoplasm. It catalyses the reaction guanosine(2445) in 23S rRNA + S-adenosyl-L-methionine = N(2)-methylguanosine(2445) in 23S rRNA + S-adenosyl-L-homocysteine + H(+). The enzyme catalyses guanosine(2069) in 23S rRNA + S-adenosyl-L-methionine = N(2)-methylguanosine(2069) in 23S rRNA + S-adenosyl-L-homocysteine + H(+). Specifically methylates the guanine in position 2445 (m2G2445) and the guanine in position 2069 (m7G2069) of 23S rRNA. The protein is Ribosomal RNA large subunit methyltransferase K/L of Histophilus somni (strain 2336) (Haemophilus somnus).